An 88-amino-acid polypeptide reads, in one-letter code: Parvalbumin beta 3 (88 aa).

A1 is subject to N-acetylalanine. An EF-hand domain is found at 31 to 66 (KSPEEVKKFFAIIDQDHSGFIEEEELKLFLQTFSAG). Positions 44, 46, 48, 50, 52, 55, and 81 each coordinate Ca(2+).

Belongs to the parvalbumin family.

In terms of biological role, in muscle, parvalbumin is thought to be involved in relaxation after contraction. It binds two calcium ions. This is Parvalbumin beta 3 from Merluccius productus (North Pacific hake).